A 266-amino-acid polypeptide reads, in one-letter code: Secreted RxLR effector protein 128 (266 aa).

Positions M1 to T18 are cleaved as a signal peptide. Residues R48 to R63 carry the RxLR-dEER motif.

This sequence belongs to the RxLR effector family.

The protein localises to the secreted. It is found in the host nucleus. Secreted effector that dos not suppress the host cell death induced by cell death-inducing proteins. This chain is Secreted RxLR effector protein 128, found in Plasmopara viticola (Downy mildew of grapevine).